A 630-amino-acid polypeptide reads, in one-letter code: Transcription factor MYC1 (630 aa).

2 disordered regions span residues 356-398 (FGDS…NNEE) and 430-463 (VKEAVVEPEKKPRKRGRKPANGREEPLNHVEAER). Residues 440 to 449 (KPRKRGRKPA) are compositionally biased toward basic residues. A compositionally biased stretch (basic and acidic residues) spans 450 to 463 (NGREEPLNHVEAER). The segment at 453–466 (EEPLNHVEAERQRR) is basic motif; degenerate. One can recognise a bHLH domain in the interval 453–502 (EEPLNHVEAERQRREKLNQRFYALRAVVPNVSKMDKASLLGDAIAYINEL). The segment at 467–502 (EKLNQRFYALRAVVPNVSKMDKASLLGDAIAYINEL) is helix-loop-helix motif.

Highly expressed in trichomes and at lower levels in leaves and flowers. Expressed at low levels in roots, stems, leaves, flowers and fruits.

Its subcellular location is the nucleus. Functionally, transcriptional activator that binds to the G-box motif (5'-AACGTG-3') found in a number of promoters of jasmonate-induced genes. Transcription activator involved in the transcriptional regulation of terpene biosynthesis in glandular trichomes. Binds to the promoter of the linalool synthase TPS5 and promotes TPS5 gene transactivation. Acts synergistically with EOT1 in the transactivation of TPS5. Involved in type VI glandular trichome development. Involved in the activation of terpene synthases required for volatile mono- and sesquiterpenes synthesis by the glandular cells of type VI trichomes. The chain is Transcription factor MYC1 from Solanum lycopersicum (Tomato).